A 509-amino-acid chain; its full sequence is Bifunctional purine biosynthesis protein PurH (509 aa).

Residues 1 to 144 (MKRALISVSD…KNYAAVTVVV (144 aa)) enclose the MGS-like domain.

The protein belongs to the PurH family.

The catalysed reaction is (6R)-10-formyltetrahydrofolate + 5-amino-1-(5-phospho-beta-D-ribosyl)imidazole-4-carboxamide = 5-formamido-1-(5-phospho-D-ribosyl)imidazole-4-carboxamide + (6S)-5,6,7,8-tetrahydrofolate. The enzyme catalyses IMP + H2O = 5-formamido-1-(5-phospho-D-ribosyl)imidazole-4-carboxamide. Its pathway is purine metabolism; IMP biosynthesis via de novo pathway; 5-formamido-1-(5-phospho-D-ribosyl)imidazole-4-carboxamide from 5-amino-1-(5-phospho-D-ribosyl)imidazole-4-carboxamide (10-formyl THF route): step 1/1. It participates in purine metabolism; IMP biosynthesis via de novo pathway; IMP from 5-formamido-1-(5-phospho-D-ribosyl)imidazole-4-carboxamide: step 1/1. This is Bifunctional purine biosynthesis protein PurH from Listeria welshimeri serovar 6b (strain ATCC 35897 / DSM 20650 / CCUG 15529 / CIP 8149 / NCTC 11857 / SLCC 5334 / V8).